A 214-amino-acid polypeptide reads, in one-letter code: Small ribosomal subunit protein uS4c (214 aa).

2 stretches are compositionally biased toward basic residues: residues 1–14 (MSRYRGPRVKKIKR) and 36–46 (LSRPKPKKKSQ). The disordered stretch occupies residues 1–46 (MSRYRGPRVKKIKRLGSLPGLTTKKPPIVVRDPRKLSRPKPKKKSQ). Residues 92-153 (MRLDNTLFRL…KEKSKALIQN (62 aa)) form the S4 RNA-binding domain.

It belongs to the universal ribosomal protein uS4 family. In terms of assembly, part of the 30S ribosomal subunit. Contacts protein S5. The interaction surface between S4 and S5 is involved in control of translational fidelity.

The protein resides in the plastid. It is found in the chloroplast. Functionally, one of the primary rRNA binding proteins, it binds directly to 16S rRNA where it nucleates assembly of the body of the 30S subunit. In terms of biological role, with S5 and S12 plays an important role in translational accuracy. In Pelargonium hortorum (Common geranium), this protein is Small ribosomal subunit protein uS4c (rps4).